Here is a 486-residue protein sequence, read N- to C-terminus: Meiosis-specific nuclear structural protein 1 (486 aa).

2 coiled-coil regions span residues 52–198 (QIEE…KEKH) and 230–440 (EDFK…KQHA).

The protein belongs to the MNS1 family.

Its subcellular location is the nucleus. It localises to the cytoplasm. The protein resides in the cytoskeleton. It is found in the cilium axoneme. The protein localises to the flagellum axoneme. Its function is as follows. Microtubule inner protein (MIP) part of the dynein-decorated doublet microtubules (DMTs) in cilia axoneme, which is required for motile cilia beating. May play a role in the control of meiotic division and germ cell differentiation through regulation of pairing and recombination during meiosis. Required for sperm flagella assembly. May play a role in the assembly and function of the outer dynein arm-docking complex (ODA-DC). ODA-DC mediates outer dynein arms (ODA) binding onto the axonemal doublet microtubules. The sequence is that of Meiosis-specific nuclear structural protein 1 (mns1) from Danio rerio (Zebrafish).